Reading from the N-terminus, the 710-residue chain is uncharacterized protein (710 aa).

Residues 1 to 20 (MKQRQARLIGTPSQTRRQQE) form a disordered region. Residues 13–42 (SQTRRQQELAEKLEKVKEVLEDEKKRQFNE) are a coiled coil.

It belongs to the IIV-6 268L family.

This is an uncharacterized protein from Invertebrate iridescent virus 6 (IIV-6).